The sequence spans 184 residues: Large ribosomal subunit protein uL15 (184 aa).

The disordered stretch occupies residues 1–55 (MDLSSLSPAKGSVKNKKRVGRGQGSGNGTTAGKGNKGQQSRSGYKRPVSEGGQMP). A compositionally biased stretch (gly residues) spans 21-35 (RGQGSGNGTTAGKGN).

This sequence belongs to the universal ribosomal protein uL15 family. Part of the 50S ribosomal subunit.

Binds to the 23S rRNA. This Prosthecochloris aestuarii (strain DSM 271 / SK 413) protein is Large ribosomal subunit protein uL15.